We begin with the raw amino-acid sequence, 503 residues long: Structure-specific endonuclease subunit EME2 (503 aa).

Composition is skewed to basic and acidic residues over residues 1–10, 38–48, and 112–135; these read METKQERETG, ETNKPQTESRK, and AEEK…LEKI. The tract at residues 1-135 is disordered; it reads METKQERETG…KAQKKELEKI (135 aa). The tract at residues 70–366 is nuclease-like domain; forms the post-nick DNA binding interface and is involved in DNA recognition and bending; the sequence is QPDVEEKTKN…RPFRKHWEAQ (297 aa). Positions 103 to 151 form a coiled coil; that stretch reads EQVAAEQEQAEEKKRQRELKRQEKAQKKELEKIERERRKETNLALKLLR. The segment at 388 to 503 is helix-hairpin-helix (2HhH); forms the pre-nick DNA binding interface and is involved in DNA recognition and bending; the sequence is GLPLTWRRQI…NPELVLDLNS (116 aa).

It belongs to the EME1/MMS4 family. As to quaternary structure, part of the heterodimeric MUS81-EME2 complex; the complex forms specifically during the DNA replication phase of the cell cycle.

It is found in the nucleus. Non-catalytic subunit of the structure-specific, heterodimeric DNA endonuclease MUS81-EME2 which is involved in the maintenance of genome stability. In the complex, EME2 is required for DNA cleavage, participating in DNA recognition and bending. MUS81-EME2 cleaves 3'-flaps and nicked Holliday junctions, and exhibit limited endonuclease activity with 5' flaps and nicked double-stranded DNAs. MUS81-EME2 which is active during the replication of DNA is more specifically involved in replication fork processing. Replication forks frequently encounter obstacles to their passage, including DNA base lesions, DNA interstrand cross-links, difficult-to-replicate sequences, transcription bubbles, or tightly bound proteins. One mechanism for the restart of a stalled replication fork involves nucleolytic cleavage mediated by the MUS81-EME2 endonuclease. By acting upon the stalled fork, MUS81-EME2 generates a DNA double-strand break (DSB) that can be repaired by homologous recombination, leading to the restoration of an active fork. MUS81-EME2 could also function in telomere maintenance. The polypeptide is Structure-specific endonuclease subunit EME2 (eme2) (Xenopus tropicalis (Western clawed frog)).